A 383-amino-acid polypeptide reads, in one-letter code: Chaperone protein DnaJ (383 aa).

The region spanning 5–70 is the J domain; sequence DYYDVLGVSK…DKKAAYDRYG (66 aa). A CR-type zinc finger spans residues 142-220; sequence GMQKTISVPG…CRGAGREEKT (79 aa). Cys-155, Cys-158, Cys-172, Cys-175, Cys-194, Cys-197, Cys-208, and Cys-211 together coordinate Zn(2+). CXXCXGXG motif repeat units lie at residues 155-162, 172-179, 194-201, and 208-215; these read CSACEGTG, CPTCSGMG, and CQACRGAG.

The protein belongs to the DnaJ family. In terms of assembly, homodimer. Requires Zn(2+) as cofactor.

The protein resides in the cytoplasm. In terms of biological role, participates actively in the response to hyperosmotic and heat shock by preventing the aggregation of stress-denatured proteins and by disaggregating proteins, also in an autonomous, DnaK-independent fashion. Unfolded proteins bind initially to DnaJ; upon interaction with the DnaJ-bound protein, DnaK hydrolyzes its bound ATP, resulting in the formation of a stable complex. GrpE releases ADP from DnaK; ATP binding to DnaK triggers the release of the substrate protein, thus completing the reaction cycle. Several rounds of ATP-dependent interactions between DnaJ, DnaK and GrpE are required for fully efficient folding. Also involved, together with DnaK and GrpE, in the DNA replication of plasmids through activation of initiation proteins. In Dinoroseobacter shibae (strain DSM 16493 / NCIMB 14021 / DFL 12), this protein is Chaperone protein DnaJ.